A 615-amino-acid chain; its full sequence is Sterol 3-beta-glucosyltransferase UGT80B1 (615 aa).

A disordered region spans residues 1–54; the sequence is MASNVFDHPLQELEGEDNGVKSEKASLLETSGSVDTTPEDSGHRSSDGHRGLDH. The span at 40–54 shows a compositional bias: basic and acidic residues; the sequence is DSGHRSSDGHRGLDH.

This sequence belongs to the glycosyltransferase 28 family. As to expression, expressed in developing seeds, seedlings, leaves and around the apical tip of cotyledons. In embryo, expressed in the seed coat and cotyledons.

The catalysed reaction is a sterol + UDP-alpha-D-glucose = a sterol 3-beta-D-glucoside + UDP + H(+). In terms of biological role, involved in the biosynthesis of sterol glucosides. Catalyzes the synthesis of steryl glycosides (SGs) and acyl steryl glycosides (ASGs) which are the most abundant sterol derivatives in higher plants. Can act on several sterols like sitosterol, campesterol and stigmasterol. Is required for embryonic development, seed suberin accumulation, cutin formation and flavanoid accumulation in the seed coat. Both UGT80A2 and UGT80B1 are required for the normal production of SGs and ASGs in seeds. In Arabidopsis thaliana (Mouse-ear cress), this protein is Sterol 3-beta-glucosyltransferase UGT80B1.